A 129-amino-acid chain; its full sequence is Small ribosomal subunit protein uS11 (129 aa).

It belongs to the universal ribosomal protein uS11 family. As to quaternary structure, part of the 30S ribosomal subunit. Interacts with proteins S7 and S18. Binds to IF-3.

Functionally, located on the platform of the 30S subunit, it bridges several disparate RNA helices of the 16S rRNA. Forms part of the Shine-Dalgarno cleft in the 70S ribosome. In Caulobacter sp. (strain K31), this protein is Small ribosomal subunit protein uS11.